The chain runs to 24 residues: Glutathione S-transferase (24 aa).

Belongs to the GST superfamily. In terms of assembly, monomer and homodimer.

It is found in the cytoplasm. The enzyme catalyses RX + glutathione = an S-substituted glutathione + a halide anion + H(+). Conjugation of reduced glutathione to a wide number of exogenous and endogenous hydrophobic electrophiles. In Pseudomonas sp. (strain CF600), this protein is Glutathione S-transferase.